A 66-amino-acid chain; its full sequence is U1-theraphotoxin-Cg1d 1 (66 aa).

Residues 1 to 21 (MKMSALFVIFGLALLFCNSFA) form the signal peptide. A propeptide spanning residues 22-29 (AELKATGR) is cleaved from the precursor. 3 disulfides stabilise this stretch: Cys-31-Cys-46, Cys-38-Cys-51, and Cys-45-Cys-58. At Pro-63 the chain carries Proline amide.

The protein belongs to the neurotoxin 10 (Hwtx-1) family. 46 (Jztx-7/10/12) subfamily. As to expression, expressed by the venom gland.

Its subcellular location is the secreted. Its function is as follows. Probable ion channel inhibitor. The protein is U1-theraphotoxin-Cg1d 1 of Chilobrachys guangxiensis (Chinese earth tiger tarantula).